The chain runs to 232 residues: BTB/POZ domain-containing protein KCTD11 (232 aa).

The 49-residue stretch at 1 to 49 folds into the BTB domain; sequence MLGAMFRADTLMPANLNPQGDGHYFIDRDGKAFRHILNFLRLGRLDLPR.

Homopentamer. Interacts with KCTD6 and KCTD21; KCTD11 and KCTD6 or KCTD21 may associate in pentameric assemblies. Component of the BCR(KCTD11) E3 ubiquitin ligase complex, at least composed of CUL3 and KCTD11 and RBX1. Interacts (via BTB domain) with CUL3; initially a 4:4 stoichiometry has been reported, however, electron microscopy revealed pentameric states of the BTB domain. Weakly expressed in lung. In the cerebellum, higher expression in non proliferating external granule cells layer than in highly proliferating ones.

It functions in the pathway protein modification; protein ubiquitination. Its function is as follows. Plays a role as a marker and a regulator of neuronal differentiation; Up-regulated by a variety of neurogenic signals, such as retinoic acid, epidermal growth factor/EGF and NGFB/nerve growth factor. Induces apoptosis, growth arrest and the expression of cyclin-dependent kinase inhibitor CDKN1B. Plays a role as a tumor repressor and inhibits cell growth and tumorigenicity of medulloblastoma (MDB). Acts as a probable substrate-specific adapter for a BCR (BTB-CUL3-RBX1) E3 ubiquitin-protein ligase complex towards HDAC1. Functions as antagonist of the Hedgehog pathway on cell proliferation and differentiation by affecting the nuclear transfer of transcription factor GLI1, thus maintaining cerebellar granule cells in undifferentiated state, this effect probably occurs via HDAC1 down-regulation, keeping GLI1 acetylated and inactive. When knock-down, Hedgehog antagonism is impaired and proliferation of granule cells is sustained. Activates the caspase cascade. This is BTB/POZ domain-containing protein KCTD11 (Kctd11) from Mus musculus (Mouse).